Reading from the N-terminus, the 488-residue chain is Facilitated trehalose transporter Tret1-2 homolog (488 aa).

Residues 1–28 (MKILMRADTHVSYSVPAEGTKANFTFSQ) are Cytoplasmic-facing. A helical membrane pass occupies residues 29–49 (VLAALSVSLCSLVVGFVSAYT). The Extracellular portion of the chain corresponds to 50–72 (SPALVSMTDRTITSFEVTKDAGS). A helical membrane pass occupies residues 73 to 93 (WVGGIMPLAALAGGITGGPLI). At 94-105 (EYLGRRNTILAT) the chain is on the cytoplasmic side. A helical membrane pass occupies residues 106-126 (AVPFIVSSLLIACAVNVIMIL). The Extracellular portion of the chain corresponds to 127-129 (CGR). A helical membrane pass occupies residues 130–150 (FLTGFCVGIASLSLPVYLGET). Residues 151–160 (LQPEVRGTLG) lie on the Cytoplasmic side of the membrane. The chain crosses the membrane as a helical span at residues 161–181 (LLPTALGNIGILVCYVAGSFM). N-linked (GlcNAc...) asparagine glycosylation is present at Asn-182. Topologically, residues 182-184 (NWS) are extracellular. The helical transmembrane segment at 185–205 (ILAFLGAALPVPFLILMIIIP) threads the bilayer. At 206-268 (ETPRWFVNRG…ELFKRINLKP (63 aa)) the chain is on the cytoplasmic side. Residues 269–289 (LSISLGLMFFQQFSGINAVIF) form a helical membrane-spanning segment. The Extracellular portion of the chain corresponds to 290–305 (YTVQIFKDAGSTIDSN). A helical membrane pass occupies residues 306–326 (LCTIIVGIVNFFATFMGIILI). Over 327-332 (DRLGRK) the chain is Cytoplasmic. A helical membrane pass occupies residues 333-353 (ILLYVSDIAMILTLSILGGFF). Over 354-372 (YCKAHGPDVSHLGWLPLSC) the chain is Extracellular. A helical membrane pass occupies residues 373–393 (FVIYILGFSLGFGPIPWLMMG). Over 394–402 (EILPAKIRG) the chain is Cytoplasmic. A helical membrane pass occupies residues 403–423 (PAASVVTAFNWFCTFVVTKTF). The Extracellular segment spans residues 424 to 433 (QDLTVAMGPH). Residues 434–454 (GAFWLFGVVCIVGLFFVIIYV) form a helical membrane-spanning segment. Residues 455-488 (PETRGKSLEEIERKMMGRVPISAVVNIKPFSFNM) lie on the Cytoplasmic side of the membrane.

Belongs to the major facilitator superfamily. Sugar transporter (TC 2.A.1.1) family. Trehalose transporter subfamily.

The protein resides in the cell membrane. Fails to transport trehalose. This is Facilitated trehalose transporter Tret1-2 homolog from Drosophila sechellia (Fruit fly).